The sequence spans 616 residues: Chaperone protein HscA (616 aa).

This sequence belongs to the heat shock protein 70 family.

Its function is as follows. Chaperone involved in the maturation of iron-sulfur cluster-containing proteins. Has a low intrinsic ATPase activity which is markedly stimulated by HscB. Involved in the maturation of IscU. The protein is Chaperone protein HscA of Photorhabdus laumondii subsp. laumondii (strain DSM 15139 / CIP 105565 / TT01) (Photorhabdus luminescens subsp. laumondii).